We begin with the raw amino-acid sequence, 212 residues long: Sentrin-specific protease 8 (212 aa).

Met1 is subject to N-acetylmethionine. The interval 11-174 (SLLRQSDVSL…MYVICNTEAL (164 aa)) is protease. Active-site residues include His102 and Asp119. Residue Cys163 is the Nucleophile of the active site.

The protein belongs to the peptidase C48 family. Broadly expressed, with highest levels in kidney and pancreas.

Protease that catalyzes two essential functions in the NEDD8 pathway: processing of full-length NEDD8 to its mature form and deconjugation of NEDD8 from targeted proteins such as cullins or p53. This Homo sapiens (Human) protein is Sentrin-specific protease 8 (SENP8).